The primary structure comprises 460 residues: Glycogen synthase (460 aa).

K15 is an ADP-alpha-D-glucose binding site.

It belongs to the glycosyltransferase 1 family. Bacterial/plant glycogen synthase subfamily.

The enzyme catalyses [(1-&gt;4)-alpha-D-glucosyl](n) + ADP-alpha-D-glucose = [(1-&gt;4)-alpha-D-glucosyl](n+1) + ADP + H(+). It functions in the pathway glycan biosynthesis; glycogen biosynthesis. Functionally, synthesizes alpha-1,4-glucan chains using ADP-glucose. This is Glycogen synthase from Trichodesmium erythraeum (strain IMS101).